A 539-amino-acid chain; its full sequence is Acid-sensing ion channel 4 (539 aa).

The Cytoplasmic portion of the chain corresponds to 1–68; that stretch reads MPIEIVCKIK…GPGPHGLRRT (68 aa). The chain crosses the membrane as a helical span at residues 69–89; the sequence is LWALALLTSLAAFLYQAASLA. The Extracellular segment spans residues 90–438; it reads RGYLTRPHLV…EQQAAYGLSA (349 aa). 2 disulfide bridges follow: Cys-118/Cys-202 and Cys-180/Cys-187. 4 N-linked (GlcNAc...) asparagine glycosylation sites follow: Asn-191, Asn-243, Asn-341, and Asn-376. Intrachain disulfides connect Cys-296/Cys-375, Cys-318/Cys-371, Cys-322/Cys-369, Cys-331/Cys-353, and Cys-333/Cys-345. The helical transmembrane segment at 439–459 threads the bilayer; that stretch reads LLGDLGGQMGLFIGASILTLL. Positions 452–454 match the GAS motif; ion selectivity filter motif; it reads GAS. Topologically, residues 460 to 539 are cytoplasmic; the sequence is EILDYIYEVS…PGSLFEDFAC (80 aa). The interval 500-531 is disordered; sequence KEQSPCPSRGRAEGGGASSLLPNHHHPHGPPG.

The protein belongs to the amiloride-sensitive sodium channel (TC 1.A.6) family. ASIC4 subfamily. As to quaternary structure, homotrimer. Heterotrimer; with other ASIC proteins producing functional channels.

Its subcellular location is the cell membrane. Functionally, does not exhibit measurable stand-alone pH-gated sodium channel activity but may form pH-gated heterotrimeric sodium channels. Its activity could also depend on alternative gating mechanisms. In Mus musculus (Mouse), this protein is Acid-sensing ion channel 4.